A 636-amino-acid polypeptide reads, in one-letter code: MYNEIPTNRPATPLLDSIDSPAELRALSEKQLPQLADELRAFLLYTVGQTGGHFGAGLGVVELTIALHYVYDTPEDRLVWDVGHQTYPHKILTSRRERMHSIRQGGGLSGFPKREESPYDTFGVGHSSTSISAAQGMAIGAKMAGTERKVAAIIGDGAMTAGMAFEALNHAAHTETDMLVVLNDNNMSISPNVGGLSTYLSKIWASKFYNSLREGSKQVLGKIPPAWEFARRTEEHFKGFMSPGTLFEEMGFNYVGPINGHDLGDLVRCLRNLREIKGPKLLHVITQKGKGFEPAELDPVGYHALNKIEPKKAAIGAVDAPKKVKFQDVFGQWLCDMAARDDKLIGITPAMCEGSGMVGFAQQFPERFYDVAIAEQHAVTLAAGMACEGQKPVVAIYSTFLQRAYDQLIHDVALQNLDVTFAIDRAGLVGEDGPTHSGSFDISYLRCIPQMLLATPSDENECRQLLYTAYQYPGPAAVRYPRGTGAGAVIEQAMTALPIGKGVVRREGKQVALLCFGTLLPTAAQVAEKLGASLCDMRFVKPLDSELIARMAASHSLLVTLEENALAGGAGSAVSEYLNSQGIAIPLLQLGFADEFIDHNSQKQQLAQQGLDAKGIETAITQHLAMMAAATKAVAG.

Residues His84 and 125–127 (GHS) each bind thiamine diphosphate. Asp156 is a Mg(2+) binding site. Residues 157-158 (GA), Asn185, Phe292, and Glu375 contribute to the thiamine diphosphate site. A Mg(2+)-binding site is contributed by Asn185.

Belongs to the transketolase family. DXPS subfamily. Homodimer. The cofactor is Mg(2+). Thiamine diphosphate is required as a cofactor.

It catalyses the reaction D-glyceraldehyde 3-phosphate + pyruvate + H(+) = 1-deoxy-D-xylulose 5-phosphate + CO2. It functions in the pathway metabolic intermediate biosynthesis; 1-deoxy-D-xylulose 5-phosphate biosynthesis; 1-deoxy-D-xylulose 5-phosphate from D-glyceraldehyde 3-phosphate and pyruvate: step 1/1. Its function is as follows. Catalyzes the acyloin condensation reaction between C atoms 2 and 3 of pyruvate and glyceraldehyde 3-phosphate to yield 1-deoxy-D-xylulose-5-phosphate (DXP). In Cellvibrio japonicus (strain Ueda107) (Pseudomonas fluorescens subsp. cellulosa), this protein is 1-deoxy-D-xylulose-5-phosphate synthase.